The sequence spans 179 residues: ATP synthase subunit delta (179 aa).

This sequence belongs to the ATPase delta chain family. As to quaternary structure, F-type ATPases have 2 components, F(1) - the catalytic core - and F(0) - the membrane proton channel. F(1) has five subunits: alpha(3), beta(3), gamma(1), delta(1), epsilon(1). F(0) has three main subunits: a(1), b(2) and c(10-14). The alpha and beta chains form an alternating ring which encloses part of the gamma chain. F(1) is attached to F(0) by a central stalk formed by the gamma and epsilon chains, while a peripheral stalk is formed by the delta and b chains.

It localises to the cell membrane. In terms of biological role, f(1)F(0) ATP synthase produces ATP from ADP in the presence of a proton or sodium gradient. F-type ATPases consist of two structural domains, F(1) containing the extramembraneous catalytic core and F(0) containing the membrane proton channel, linked together by a central stalk and a peripheral stalk. During catalysis, ATP synthesis in the catalytic domain of F(1) is coupled via a rotary mechanism of the central stalk subunits to proton translocation. Functionally, this protein is part of the stalk that links CF(0) to CF(1). It either transmits conformational changes from CF(0) to CF(1) or is implicated in proton conduction. The polypeptide is ATP synthase subunit delta (Natranaerobius thermophilus (strain ATCC BAA-1301 / DSM 18059 / JW/NM-WN-LF)).